We begin with the raw amino-acid sequence, 208 residues long: Na(+)-translocating NADH-quinone reductase subunit D (208 aa).

5 helical membrane-spanning segments follow: residues 42–62, 72–92, 103–123, 131–151, and 178–198; these read FVMA…VSLI, IIVQ…ILKA, VFVG…AFAM, FVDG…VAFF, and NGLF…IWGL.

Belongs to the NqrDE/RnfAE family. As to quaternary structure, composed of six subunits; NqrA, NqrB, NqrC, NqrD, NqrE and NqrF.

It localises to the cell inner membrane. The catalysed reaction is a ubiquinone + n Na(+)(in) + NADH + H(+) = a ubiquinol + n Na(+)(out) + NAD(+). NQR complex catalyzes the reduction of ubiquinone-1 to ubiquinol by two successive reactions, coupled with the transport of Na(+) ions from the cytoplasm to the periplasm. NqrA to NqrE are probably involved in the second step, the conversion of ubisemiquinone to ubiquinol. The protein is Na(+)-translocating NADH-quinone reductase subunit D of Haemophilus influenzae (strain 86-028NP).